A 350-amino-acid chain; its full sequence is METSCFTLLGLLVSLSFFLTLSAQMTGNFNCSGSTSTCQSLVGYSSKNATTLRNIQTLFAVKNLRSILGANNLPLNTSRDQRVNPNQVVRVPIHCSCSNGTGVSNRDIEYTIKKDDILSFVATEIFGGLVTYEKISEVNKIPDPNKIEIGQKFWIPLPCSCDKLNGEDVVHYAHVVKLGSSLGEIAAQFGTDNTTLAQLNGIIGDSQLLADKPLDVPLKACSSSVRKDSLDAPLLLSNNSYVFTANNCVKCTCDALKNWTLSCQSSSEIKPSNWQTCPPFSQCDGALLNASCRQPRDCVYAGYSNQTIFTTASPACPDSAGPDNYASTLSSSFNFVIVLIQCALLCLCLL.

Positions 1 to 23 (METSCFTLLGLLVSLSFFLTLSA) are cleaved as a signal peptide. N-linked (GlcNAc...) asparagine glycans are attached at residues asparagine 30, asparagine 48, asparagine 76, and asparagine 99. Intrachain disulfides connect cysteine 31-cysteine 97, cysteine 38-cysteine 161, cysteine 95-cysteine 159, and cysteine 97-cysteine 161. LysM domains lie at 108–155 (IEYT…KFWI) and 172–216 (YAHV…PLDV). Residues 114–120 (KDDILSF) and 142–149 (PDPNKIEI) contribute to the chitin site. 5 N-linked (GlcNAc...) asparagine glycosylation sites follow: asparagine 193, asparagine 238, asparagine 258, asparagine 289, and asparagine 305. Intrachain disulfides connect cysteine 221–cysteine 253 and cysteine 248–cysteine 277. Aspartate 318 carries the GPI-anchor amidated aspartate lipid modification. The propeptide at 319–350 (SAGPDNYASTLSSSFNFVIVLIQCALLCLCLL) is removed in mature form.

In terms of assembly, forms homooligomers. Interacts with CERK1. Binds to chitin oligosaccharide elicitor.

Its subcellular location is the cell membrane. Chitin elicitor-binding protein involved in the perception of chitin oligosaccharide elicitor. The chain is LysM domain-containing GPI-anchored protein 2 (LYM2) from Arabidopsis thaliana (Mouse-ear cress).